Here is a 78-residue protein sequence, read N- to C-terminus: Large ribosomal subunit protein bL28 (78 aa).

Belongs to the bacterial ribosomal protein bL28 family.

This is Large ribosomal subunit protein bL28 (rpmB) from Treponema pallidum (strain Nichols).